Reading from the N-terminus, the 292-residue chain is tRNA pseudouridine synthase B (292 aa).

D40 serves as the catalytic Nucleophile.

It belongs to the pseudouridine synthase TruB family. Type 1 subfamily.

The enzyme catalyses uridine(55) in tRNA = pseudouridine(55) in tRNA. Its function is as follows. Responsible for synthesis of pseudouridine from uracil-55 in the psi GC loop of transfer RNAs. The sequence is that of tRNA pseudouridine synthase B from Mycoplasma capricolum subsp. capricolum (strain California kid / ATCC 27343 / NCTC 10154).